The chain runs to 309 residues: 2-dehydro-3-deoxygluconokinase (309 aa).

Substrate contacts are provided by residues 34–38 (GAEVN), Y89, 103–105 (YYR), and R167. ATP contacts are provided by residues 165 to 167 (NYR), S193, 219 to 225 (KRGAKGA), 248 to 251 (GAGD), and N275. D251 serves as a coordination point for substrate. Residue D251 is the Proton acceptor of the active site. D287 contributes to the substrate binding site.

Belongs to the carbohydrate kinase pfkB family. As to quaternary structure, homohexamer; trimer of dimers.

The enzyme catalyses 2-dehydro-3-deoxy-D-gluconate + ATP = 2-dehydro-3-deoxy-6-phospho-D-gluconate + ADP + H(+). It functions in the pathway carbohydrate acid metabolism; 2-dehydro-3-deoxy-D-gluconate degradation; D-glyceraldehyde 3-phosphate and pyruvate from 2-dehydro-3-deoxy-D-gluconate: step 1/2. Functionally, involved in the degradation of glucose via the semi-phosphorylative Entner-Doudoroff pathway. Catalyzes the phosphorylation of 2-keto-3-deoxygluconate (KDG) to produce 2-keto-3-deoxy-6-phosphogluconate (KDPG). This Thermus thermophilus (strain ATCC 27634 / DSM 579 / HB8) protein is 2-dehydro-3-deoxygluconokinase (kdgK).